We begin with the raw amino-acid sequence, 721 residues long: Ribonucleoside-diphosphate reductase subunit alpha (721 aa).

Residues Thr159, Ser175–Cys176, Gly204, Asn384–Glu388, and Pro589–Ile593 contribute to the substrate site. The cysteines at positions 176 and 413 are disulfide-linked. Asn384 acts as the Proton acceptor in catalysis. Catalysis depends on Cys386, which acts as the Cysteine radical intermediate. Glu388 (proton acceptor) is an active-site residue.

Belongs to the ribonucleoside diphosphate reductase large chain family. In terms of assembly, tetramer of two alpha and two beta subunits.

The catalysed reaction is a 2'-deoxyribonucleoside 5'-diphosphate + [thioredoxin]-disulfide + H2O = a ribonucleoside 5'-diphosphate + [thioredoxin]-dithiol. With respect to regulation, under complex allosteric control mediated by deoxynucleoside triphosphates and ATP binding. The type of nucleotide bound at the specificity site determines substrate preference. It seems probable that ATP makes the enzyme reduce CDP and UDP, dGTP favors ADP reduction and dTTP favors GDP reduction. Functionally, provides the precursors necessary for DNA synthesis. Catalyzes the biosynthesis of deoxyribonucleotides from the corresponding ribonucleotides. The chain is Ribonucleoside-diphosphate reductase subunit alpha (nrdE) from Mycoplasma genitalium (strain ATCC 33530 / DSM 19775 / NCTC 10195 / G37) (Mycoplasmoides genitalium).